Here is a 34-residue protein sequence, read N- to C-terminus: Potassium channel toxin alpha-KTx 6.17 (34 aa).

4 disulfide bridges follow: C3–C24, C9–C29, C13–C31, and C19–C34.

The protein belongs to the short scorpion toxin superfamily. Potassium channel inhibitor family. Alpha-KTx 06 subfamily. As to expression, expressed by the venom gland.

The protein resides in the secreted. This toxin reversibly blocks Shaker B potassium-channels (expressed in insect Sf9 cells) with a Kd of 96.6 nM, and presents an even better affinity toward hKv1.3 (KCNA3), blocking it with a Kd of 17.7 nM. In Opisthacanthus cayaporum (South American scorpion), this protein is Potassium channel toxin alpha-KTx 6.17.